The sequence spans 890 residues: DNA mismatch repair protein MutS (890 aa).

Position 645 to 652 (645 to 652) interacts with ATP; sequence GPNMAGKS.

This sequence belongs to the DNA mismatch repair MutS family.

In terms of biological role, this protein is involved in the repair of mismatches in DNA. It is possible that it carries out the mismatch recognition step. This protein has a weak ATPase activity. This chain is DNA mismatch repair protein MutS, found in Rickettsia africae (strain ESF-5).